Consider the following 199-residue polypeptide: Probable GTP-binding protein EngB (199 aa).

Residues 28–199 (DLPEIALAGR…DSWDAILEQV (172 aa)) enclose the EngB-type G domain. GTP-binding positions include 36–43 (GRSNVGKS), 63–67 (GKTQL), 81–84 (DVPG), 148–151 (TKAD), and 180–182 (FSS). Mg(2+)-binding residues include Ser-43 and Thr-65.

Belongs to the TRAFAC class TrmE-Era-EngA-EngB-Septin-like GTPase superfamily. EngB GTPase family. It depends on Mg(2+) as a cofactor.

Necessary for normal cell division and for the maintenance of normal septation. The protein is Probable GTP-binding protein EngB of Streptococcus pyogenes serotype M3 (strain SSI-1).